We begin with the raw amino-acid sequence, 155 residues long: Ribosomal RNA large subunit methyltransferase H (155 aa).

S-adenosyl-L-methionine-binding positions include Leu-72, Gly-103, and Leu-122–Leu-127.

The protein belongs to the RNA methyltransferase RlmH family. As to quaternary structure, homodimer.

It is found in the cytoplasm. The catalysed reaction is pseudouridine(1915) in 23S rRNA + S-adenosyl-L-methionine = N(3)-methylpseudouridine(1915) in 23S rRNA + S-adenosyl-L-homocysteine + H(+). Its function is as follows. Specifically methylates the pseudouridine at position 1915 (m3Psi1915) in 23S rRNA. The chain is Ribosomal RNA large subunit methyltransferase H from Haemophilus ducreyi (strain 35000HP / ATCC 700724).